A 319-amino-acid polypeptide reads, in one-letter code: Ribosomal RNA small subunit methyltransferase H (319 aa).

Residues 34–36 (GGH), aspartate 54, phenylalanine 83, aspartate 104, and glutamine 111 each bind S-adenosyl-L-methionine.

It belongs to the methyltransferase superfamily. RsmH family.

It localises to the cytoplasm. It catalyses the reaction cytidine(1402) in 16S rRNA + S-adenosyl-L-methionine = N(4)-methylcytidine(1402) in 16S rRNA + S-adenosyl-L-homocysteine + H(+). In terms of biological role, specifically methylates the N4 position of cytidine in position 1402 (C1402) of 16S rRNA. The polypeptide is Ribosomal RNA small subunit methyltransferase H (Lactiplantibacillus plantarum (strain ATCC BAA-793 / NCIMB 8826 / WCFS1) (Lactobacillus plantarum)).